Here is a 485-residue protein sequence, read N- to C-terminus: MASKKIRTRFAPSPTGYMHVGNLRTALYAYLIAKHEAGDFILRIEDTDQERLVDGAVDIIYNTLKLTGLNHDEGPDVGGEVGPYVQSERKAIYLEYAKNLVEKGEAYYCFCSKDRLDMLKENAEALKRPFKYDKHCLHLTKEEIEANLAKGLPYVIRQNNPTTGSTTFDDVIYGKITVDNSELEDMILIKSDGLPTYNFANVVDDHLMGITHVVRGNEYLSSSPKYNRLYEAFGWDVPIYVHCPPIMKDTHHKLSKRNGDASFEDLIQKGYLKEAVLNYIALLGWNPGTNEEIFSLEELTEKFDFKDISKSPAIFDDAKLKWMNGEYIRKLSLDEFHELAVPEYKKVLKKDFDLKFISDLLHTRCELLSDLADQIDFLEELPEYSTDLYVHKKMKSTVESSLENLEKVLPIIEEIDETNWNKDYIHEKVFELIKSLEIKNGQMLWPIRTALSGKSFTPGGAFELAILLGKEESISRLKKGIELLK.

Residues Pro-12 to Asn-22 carry the 'HIGH' region motif. Zn(2+) contacts are provided by Cys-109, Cys-111, Cys-136, and His-138. Residues Lys-253–Arg-257 carry the 'KMSKS' region motif. Lys-256 is a binding site for ATP.

This sequence belongs to the class-I aminoacyl-tRNA synthetase family. Glutamate--tRNA ligase type 1 subfamily. Monomer. The cofactor is Zn(2+).

The protein localises to the cytoplasm. It carries out the reaction tRNA(Glu) + L-glutamate + ATP = L-glutamyl-tRNA(Glu) + AMP + diphosphate. Its function is as follows. Catalyzes the attachment of glutamate to tRNA(Glu) in a two-step reaction: glutamate is first activated by ATP to form Glu-AMP and then transferred to the acceptor end of tRNA(Glu). The protein is Glutamate--tRNA ligase of Clostridium botulinum (strain Eklund 17B / Type B).